The chain runs to 606 residues: ATP-dependent rRNA helicase SPB4 (606 aa).

Positions 7–35 (WDNLGFSLLPWIRTGLDVMGFETMTPVQA) match the Q motif motif. The 187-residue stretch at 38–224 (IPMLAGNKDV…KTGLRNPVRI (187 aa)) folds into the Helicase ATP-binding domain. 51–58 (SVTGSGKT) is a binding site for ATP. A DEAD box motif is present at residues 172–175 (DEAD). A Helicase C-terminal domain is found at 248–404 (KLQLLVSILN…ELDLEVKGIT (157 aa)). Serine 254 carries the post-translational modification Phosphoserine. The stretch at 539–582 (KTLTKERKLERKEKMSLKRKAIEEELKAEELDENAEEERIKEDW) forms a coiled coil.

The protein belongs to the DEAD box helicase family. DDX55/SPB4 subfamily. In terms of assembly, component of pre-60S ribosomal complexes.

The protein localises to the nucleus. The protein resides in the nucleolus. The enzyme catalyses ATP + H2O = ADP + phosphate + H(+). Its function is as follows. ATP-binding RNA helicase involved in the biogenesis of 60S ribosomal subunits. Binds 90S pre-ribosomal particles and dissociates from pre-60S ribosomal particles after processing of 27SB pre-rRNA. Required for the normal formation of 18S rRNA through the processing of pre-rRNAs at sites A0, A1 and A2, and the normal formation of 25S and 5.8S rRNAs through the processing of pre-rRNAs at sites C1 and C2. Also required for recruitment of NOG2 to pre-ribosomes. The protein is ATP-dependent rRNA helicase SPB4 of Saccharomyces cerevisiae (strain ATCC 204508 / S288c) (Baker's yeast).